The sequence spans 187 residues: Elongation factor P (187 aa).

It belongs to the elongation factor P family.

The protein resides in the cytoplasm. It participates in protein biosynthesis; polypeptide chain elongation. In terms of biological role, involved in peptide bond synthesis. Stimulates efficient translation and peptide-bond synthesis on native or reconstituted 70S ribosomes in vitro. Probably functions indirectly by altering the affinity of the ribosome for aminoacyl-tRNA, thus increasing their reactivity as acceptors for peptidyl transferase. The polypeptide is Elongation factor P (Prochlorococcus marinus (strain NATL1A)).